We begin with the raw amino-acid sequence, 313 residues long: Adhesin MafA 1/2 (313 aa).

The signal sequence occupies residues 1–14 (MKTLLLLIPLVLTA). Cys15 carries the N-palmitoyl cysteine lipid modification. The S-diacylglycerol cysteine moiety is linked to residue Cys15. The span at 282–298 (GDTTAQNRPDFKQNNGK) shows a compositional bias: polar residues. The interval 282–313 (GDTTAQNRPDFKQNNGKNPDVGNEVIRRRKGG) is disordered.

It belongs to the MafA family.

Its subcellular location is the cell outer membrane. This is Adhesin MafA 1/2 (mafA1) from Neisseria meningitidis serogroup C (strain 053442).